Reading from the N-terminus, the 449-residue chain is Glucose-6-phosphate isomerase (449 aa).

The Proton donor role is filled by glutamate 291. Active-site residues include histidine 312 and lysine 426.

Belongs to the GPI family.

It localises to the cytoplasm. It carries out the reaction alpha-D-glucose 6-phosphate = beta-D-fructose 6-phosphate. It functions in the pathway carbohydrate biosynthesis; gluconeogenesis. The protein operates within carbohydrate degradation; glycolysis; D-glyceraldehyde 3-phosphate and glycerone phosphate from D-glucose: step 2/4. Functionally, catalyzes the reversible isomerization of glucose-6-phosphate to fructose-6-phosphate. This Streptococcus pneumoniae serotype 4 (strain ATCC BAA-334 / TIGR4) protein is Glucose-6-phosphate isomerase.